The chain runs to 338 residues: Fructose-1,6-bisphosphatase class 1 1 (338 aa).

Glu94, Asp116, Leu118, and Asp119 together coordinate Mg(2+). Substrate is bound by residues 119-122 (DGSS), Asn210, and Lys276. Glu282 provides a ligand contact to Mg(2+).

It belongs to the FBPase class 1 family. In terms of assembly, homotetramer. Requires Mg(2+) as cofactor.

Its subcellular location is the cytoplasm. It carries out the reaction beta-D-fructose 1,6-bisphosphate + H2O = beta-D-fructose 6-phosphate + phosphate. It functions in the pathway carbohydrate biosynthesis; gluconeogenesis. This Paraburkholderia phymatum (strain DSM 17167 / CIP 108236 / LMG 21445 / STM815) (Burkholderia phymatum) protein is Fructose-1,6-bisphosphatase class 1 1.